A 298-amino-acid chain; its full sequence is Junctional adhesion molecule A (298 aa).

The signal sequence occupies residues 1-28 (MGTEARAGRRQLLVFTSVVLSSLALGRG). Ig-like V-type domains are found at residues 29-126 (AVYT…VQLT) and 134-227 (PTVH…EAVR). Residues 29–237 (AVYTSEPDVR…MEAAELNVGG (209 aa)) are Extracellular-facing. Intrachain disulfides connect C49-C108 and C152-C211. A glycan (N-linked (GlcNAc...) asparagine) is linked at N184. Residues 238–258 (IVAAVLVTLILLGFLILGIWF) traverse the membrane as a helical segment. Residues 259–298 (AYRRGYFDRTKKGTSSKKVIYSQPAARSEGEFRQTSSFLV) lie on the Cytoplasmic side of the membrane. Phosphoserine is present on residues S280 and S286.

Belongs to the immunoglobulin superfamily. In terms of assembly, interacts with the ninth PDZ domain of MPDZ. Interacts with the first PDZ domain of PARD3. The association between PARD3 and PARD6B probably disrupts this interaction. Interacts with ITGAL (via I-domain). Interacts with CD151. (Microbial infection) Interacts with calicivirus capsid protein. As to quaternary structure, (Microbial infection) Interacts with the orthoreovirus sigma-1 capsid protein.

The protein resides in the cell junction. It is found in the tight junction. It localises to the cell membrane. Seems to play a role in epithelial tight junction formation. Appears early in primordial forms of cell junctions and recruits PARD3. The association of the PARD6-PARD3 complex may prevent the interaction of PARD3 with JAM1, thereby preventing tight junction assembly. Plays a role in regulating monocyte transmigration involved in integrity of epithelial barrier. Ligand for integrin alpha-L/beta-2 involved in memory T-cell and neutrophil transmigration. Involved in platelet activation. Functionally, (Microbial infection) Acts as a functional receptor for murine norovirus. Its function is as follows. (Microbial infection) In case of orthoreovirus infection, serves as receptor for the virus. The sequence is that of Junctional adhesion molecule A (F11R) from Felis catus (Cat).